The following is a 252-amino-acid chain: 2-succinyl-6-hydroxy-2,4-cyclohexadiene-1-carboxylate synthase (252 aa).

It belongs to the AB hydrolase superfamily. MenH family. Monomer.

The catalysed reaction is 5-enolpyruvoyl-6-hydroxy-2-succinyl-cyclohex-3-ene-1-carboxylate = (1R,6R)-6-hydroxy-2-succinyl-cyclohexa-2,4-diene-1-carboxylate + pyruvate. The protein operates within quinol/quinone metabolism; 1,4-dihydroxy-2-naphthoate biosynthesis; 1,4-dihydroxy-2-naphthoate from chorismate: step 3/7. It functions in the pathway quinol/quinone metabolism; menaquinone biosynthesis. Catalyzes a proton abstraction reaction that results in 2,5-elimination of pyruvate from 2-succinyl-5-enolpyruvyl-6-hydroxy-3-cyclohexene-1-carboxylate (SEPHCHC) and the formation of 2-succinyl-6-hydroxy-2,4-cyclohexadiene-1-carboxylate (SHCHC). In Salmonella heidelberg (strain SL476), this protein is 2-succinyl-6-hydroxy-2,4-cyclohexadiene-1-carboxylate synthase.